The primary structure comprises 273 residues: 4-hydroxy-tetrahydrodipicolinate reductase (273 aa).

NAD(+) contacts are provided by residues 12 to 17 (GAGGRM) and E38. R39 is an NADP(+) binding site. NAD(+) contacts are provided by residues 102-104 (GTT) and 126-129 (AANF). The Proton donor/acceptor role is filled by H159. H160 contributes to the (S)-2,3,4,5-tetrahydrodipicolinate binding site. K163 (proton donor) is an active-site residue. Position 169-170 (169-170 (GT)) interacts with (S)-2,3,4,5-tetrahydrodipicolinate.

It belongs to the DapB family. In terms of assembly, homotetramer.

The protein localises to the cytoplasm. The enzyme catalyses (S)-2,3,4,5-tetrahydrodipicolinate + NAD(+) + H2O = (2S,4S)-4-hydroxy-2,3,4,5-tetrahydrodipicolinate + NADH + H(+). It carries out the reaction (S)-2,3,4,5-tetrahydrodipicolinate + NADP(+) + H2O = (2S,4S)-4-hydroxy-2,3,4,5-tetrahydrodipicolinate + NADPH + H(+). It participates in amino-acid biosynthesis; L-lysine biosynthesis via DAP pathway; (S)-tetrahydrodipicolinate from L-aspartate: step 4/4. Functionally, catalyzes the conversion of 4-hydroxy-tetrahydrodipicolinate (HTPA) to tetrahydrodipicolinate. The sequence is that of 4-hydroxy-tetrahydrodipicolinate reductase from Escherichia coli O127:H6 (strain E2348/69 / EPEC).